Consider the following 491-residue polypeptide: Probable glycine dehydrogenase (decarboxylating) subunit 2 (491 aa).

Lys273 is subject to N6-(pyridoxal phosphate)lysine.

Belongs to the GcvP family. C-terminal subunit subfamily. In terms of assembly, the glycine cleavage system is composed of four proteins: P, T, L and H. In this organism, the P 'protein' is a heterodimer of two subunits. Pyridoxal 5'-phosphate serves as cofactor.

It catalyses the reaction N(6)-[(R)-lipoyl]-L-lysyl-[glycine-cleavage complex H protein] + glycine + H(+) = N(6)-[(R)-S(8)-aminomethyldihydrolipoyl]-L-lysyl-[glycine-cleavage complex H protein] + CO2. Its function is as follows. The glycine cleavage system catalyzes the degradation of glycine. The P protein binds the alpha-amino group of glycine through its pyridoxal phosphate cofactor; CO(2) is released and the remaining methylamine moiety is then transferred to the lipoamide cofactor of the H protein. The chain is Probable glycine dehydrogenase (decarboxylating) subunit 2 from Bacillus cereus (strain G9842).